Consider the following 402-residue polypeptide: Putative RNA-guided DNA endonuclease (402 aa).

The active site involves Asp188. Residues 202–239 (KITNPKHERRDRARLAKAQRDVSRKAKGSANRKKARRK) are disordered. The segment covering 204–225 (TNPKHERRDRARLAKAQRDVSR) has biased composition (basic and acidic residues). The span at 226–239 (KAKGSANRKKARRK) shows a compositional bias: basic residues. Glu272 is an active-site residue. Zn(2+) contacts are provided by Cys325, Cys328, Cys344, and Cys346. Asp353 is a catalytic residue. The interval 373–402 (GIRPQRESSRTGRSSVKQEPQRATAGIPRL) is disordered.

It in the N-terminal section; belongs to the transposase 2 family. This sequence in the C-terminal section; belongs to the transposase 35 family.

Its function is as follows. An RNA-guided dsDNA endonuclease. When guided by an RNA derived from the right-end element of its insertion sequence element (IS), cleaves DNA downstream of the transposon-associated motif (TAM). Cleaves supercoiled and linear DNA in a staggered manner 15-21 bases from the TAM yielding 5'-overhangs. Binds reRNA, an approximately 150 nucleotide base sRNA derived from the 3' end of its own gene, the right end (RE) of the insertion sequence (IS) plus sequence downstream of the IS. In Streptomyces pristinaespiralis, this protein is Putative RNA-guided DNA endonuclease.